The chain runs to 246 residues: CTD nuclear envelope phosphatase 1 homolog (246 aa).

Residues 3 to 23 (TIAQSVFCFLAGFFNFFLLYF) traverse the membrane as a helical segment. The 168-residue stretch at 53 to 220 (LTVKRKILVL…LNLLPFLDAL (168 aa)) folds into the FCP1 homology domain.

This sequence belongs to the dullard family.

Its subcellular location is the membrane. It localises to the nucleus envelope. It catalyses the reaction O-phospho-L-seryl-[protein] + H2O = L-seryl-[protein] + phosphate. The catalysed reaction is O-phospho-L-threonyl-[protein] + H2O = L-threonyl-[protein] + phosphate. Its function is as follows. Serine/threonine protein phosphatase that may dephosphorylate and activate lipin-like phosphatases. Lipins are phosphatidate phosphatases that catalyze the conversion of phosphatidic acid to diacylglycerol and control the metabolism of fatty acids at different levels. May indirectly modulate the lipid composition of nuclear and/or endoplasmic reticulum membranes and be required for proper nuclear membrane morphology and/or dynamics. Contributes to closure of nuclear envelope (NE) holes and prevents excess nuclear membranes after meiosis and mitosis, possibly through spatial regulation of lipin. May limit the production of endoplasmic reticulum (ER) sheets proximal to the NE to prevent the ER membranes that feed into NE openings from invading the nuclear interior and thereby restrict nuclear transport to nuclear pore complexes (NPCs). May also indirectly regulate the production of lipid droplets and triacylglycerol. This is CTD nuclear envelope phosphatase 1 homolog (cnep-1) from Caenorhabditis elegans.